An 807-amino-acid polypeptide reads, in one-letter code: Spondin-1 (807 aa).

An N-terminal signal peptide occupies residues 1–28; that stretch reads MRLSPVSLRLSRGPALLALALPLAAALA. The region spanning 29–194 is the Reelin domain; that stretch reads FSDETLDKVT…DPTLDGVTDR (166 aa). 17 disulfides stabilise this stretch: cysteine 44–cysteine 128, cysteine 156–cysteine 182, cysteine 199–cysteine 336, cysteine 200–cysteine 340, cysteine 202–cysteine 415, cysteine 443–cysteine 480, cysteine 454–cysteine 489, cysteine 459–cysteine 494, cysteine 502–cysteine 538, cysteine 513–cysteine 517, cysteine 548–cysteine 554, cysteine 559–cysteine 595, cysteine 570–cysteine 574, cysteine 605–cysteine 610, cysteine 615–cysteine 650, cysteine 626–cysteine 630, and cysteine 660–cysteine 665. Residues 195-388 enclose the Spondin domain; it reads PILDCCACGT…LTSLDHPQSP (194 aa). An N-linked (GlcNAc...) asparagine glycan is attached at asparagine 214. Ca(2+) contacts are provided by aspartate 325, aspartate 354, and aspartate 358. TSP type-1 domains lie at 442 to 495, 501 to 555, 558 to 611, 614 to 666, and 668 to 721; these read TCIY…PGCS, TCTM…EECS, SCLV…PECH, PCLL…PECP, and DCEL…RKCL. N-linked (GlcNAc...) asparagine glycosylation is present at asparagine 681. Residues 732–746 are compositionally biased toward basic and acidic residues; the sequence is REARESRRSEQLREE. The interval 732–752 is disordered; it reads REARESRRSEQLREESDGEQF. Positions 754 to 806 constitute a TSP type-1 6 domain; it reads GCRMRPWTAWSECTKLCGGGIQERYMTVKKRFKSSQFTSCKDKKEIRACNVHP.

As to quaternary structure, binds to the central extracellular domain of APP and inhibits beta-secretase cleavage of APP.

It localises to the secreted. It is found in the extracellular space. The protein localises to the extracellular matrix. Its function is as follows. Cell adhesion protein that promotes the attachment of spinal cord and sensory neuron cells and the outgrowth of neurites in vitro. May contribute to the growth and guidance of axons in both the spinal cord and the PNS. The chain is Spondin-1 (Spon1) from Mus musculus (Mouse).